A 722-amino-acid chain; its full sequence is Probable glycerol-3-phosphate dehydrogenase, mitochondrial (722 aa).

The N-terminal 43 residues, 1–43, are a transit peptide targeting the mitochondrion; the sequence is MSWVRFTKTGVAVVATSAAAVLALDMTNERRFQRQVKDHFRTV. Residue 76-104 participates in FAD binding; it reads DVLIIGGGATGAGVALDAQTRGLKTALVE. EF-hand domains follow at residues 624–659 and 660–695; these read EEMQ…HNQK and IDER…LKGG. Residues D673, N675, N677, E679, and E684 each coordinate Ca(2+).

The protein belongs to the FAD-dependent glycerol-3-phosphate dehydrogenase family. FAD is required as a cofactor.

The protein resides in the mitochondrion. It carries out the reaction a quinone + sn-glycerol 3-phosphate = dihydroxyacetone phosphate + a quinol. It functions in the pathway polyol metabolism; glycerol degradation via glycerol kinase pathway; glycerone phosphate from sn-glycerol 3-phosphate (anaerobic route): step 1/1. With respect to regulation, calcium-binding enhances the activity of the enzyme. The chain is Probable glycerol-3-phosphate dehydrogenase, mitochondrial from Caenorhabditis elegans.